Consider the following 769-residue polypeptide: Serine protease HtrA-like (769 aa).

The span at 1 to 20 shows a compositional bias: basic residues; the sequence is MDIGKKHVIPKSQYRRKRRE. Residues 1–390 are disordered; it reads MDIGKKHVIP…ATSKLNKGRA (390 aa). Composition is skewed to basic and acidic residues over residues 21-64 and 71-108; these read FFHN…ERFK and LEQRNRDVNENKAEESKSNQDSKSAYNRDHYLTDDVSK. Over residues 126–137 the composition is skewed to polar residues; it reads YEQNSEATLSTK. Basic and acidic residues predominate over residues 138–186; it reads STDKVESTEMRKLSSDKNKVGHEEQHVLSKPSEHDKETRIDSESSRTDS. A compositionally biased stretch (polar residues) spans 247 to 262; it reads QQSQNEQTKTYTYGDS. Composition is skewed to basic and acidic residues over residues 264 to 296 and 310 to 330; these read QNDKSNHENDLSHHIPSISDDKDNVMRENHIVD and KTDDDRKLDEKIHVEDKHKQN. Residues 331–347 show a composition bias toward polar residues; it reads ADSSETVGYQSQSTASH. A compositionally biased stretch (basic and acidic residues) spans 348 to 364; it reads RSTEKRNISINDHDKLN. A compositionally biased stretch (polar residues) spans 365 to 390; the sequence is GQKTNTKTSANNNQKKATSKLNKGRA. The chain crosses the membrane as a helical span at residues 410–430; the sequence is LVILMGIIILIVILNAIFNNV. Catalysis depends on charge relay system residues histidine 504, aspartate 534, and serine 619. The PDZ domain occupies 680 to 733; it reads IASLNSFERQAVKLPGKVKNGVVVDQVDNNGLADQSGLKKGDVITELDGKLLED.

The protein belongs to the peptidase S1C family.

The protein localises to the cell membrane. In Staphylococcus aureus (strain USA300), this protein is Serine protease HtrA-like.